We begin with the raw amino-acid sequence, 951 residues long: Valine--tRNA ligase (951 aa).

Residues 42-52 carry the 'HIGH' region motif; the sequence is PNVTGSLHMGH. The 'KMSKS' region signature appears at 554–558; that stretch reads KMSKS. Lys557 contacts ATP. Residues 880–944 adopt a coiled-coil conformation; it reads AGLINKEDEL…AEAKAKLIEQ (65 aa).

The protein belongs to the class-I aminoacyl-tRNA synthetase family. ValS type 1 subfamily. Monomer.

Its subcellular location is the cytoplasm. The enzyme catalyses tRNA(Val) + L-valine + ATP = L-valyl-tRNA(Val) + AMP + diphosphate. Functionally, catalyzes the attachment of valine to tRNA(Val). As ValRS can inadvertently accommodate and process structurally similar amino acids such as threonine, to avoid such errors, it has a 'posttransfer' editing activity that hydrolyzes mischarged Thr-tRNA(Val) in a tRNA-dependent manner. In Salmonella paratyphi A (strain ATCC 9150 / SARB42), this protein is Valine--tRNA ligase.